A 638-amino-acid polypeptide reads, in one-letter code: 1,4-alpha-glucan branching enzyme GlgB (638 aa).

Aspartate 320 acts as the Nucleophile in catalysis. Glutamate 373 serves as the catalytic Proton donor.

Belongs to the glycosyl hydrolase 13 family. GlgB subfamily. In terms of assembly, monomer.

It catalyses the reaction Transfers a segment of a (1-&gt;4)-alpha-D-glucan chain to a primary hydroxy group in a similar glucan chain.. It functions in the pathway glycan biosynthesis; glycogen biosynthesis. Catalyzes the formation of the alpha-1,6-glucosidic linkages in glycogen by scission of a 1,4-alpha-linked oligosaccharide from growing alpha-1,4-glucan chains and the subsequent attachment of the oligosaccharide to the alpha-1,6 position. The polypeptide is 1,4-alpha-glucan branching enzyme GlgB (Oleidesulfovibrio alaskensis (strain ATCC BAA-1058 / DSM 17464 / G20) (Desulfovibrio alaskensis)).